A 233-amino-acid chain; its full sequence is MEEYETDIKQILGTVDRQTVSAKQVRQLLEERRKVDLSAHKKDLNALILKCFDETAAPSEKESLEKQAPARKTKGKRATENGTEEGKKPAKRTRKRKEDGEEGGKRKRNQDPANNPLNKPMKLSPKLAEFLGLEQLSRPQTVKKLWEYIKAHDLQDPNDKRTILCDDKLKSVFEVDTLHMFTMNKYLTNLMTKIPDDQLPKPQPKNEEPAAPNDLPKQEEKELVEPPTAESTA.

Residues 1–53 form the DEK-C domain; sequence MEEYETDIKQILGTVDRQTVSAKQVRQLLEERRKVDLSAHKKDLNALILKCFD. Disordered stretches follow at residues 55–122 and 194–233; these read TAAP…KPMK and IPDDQLPKPQPKNEEPAAPNDLPKQEEKELVEPPTAESTA. The 78-residue stretch at 116–193 folds into the SWIB/MDM2 domain; the sequence is PLNKPMKLSP…NKYLTNLMTK (78 aa). Basic and acidic residues predominate over residues 194–208; sequence IPDDQLPKPQPKNEE.

In terms of assembly, component of the UAF (upstream activation factor) complex which consists of spp27/uaf30, rrn5, rrn10, and histones H3 and H4. Interacts with rrn10.

The protein resides in the cytoplasm. It localises to the nucleus. Component of the UAF (upstream activation factor) complex which interacts with the upstream element of the RNA polymerase I promoter and forms a stable preinitiation complex. UAF seems to stimulate basal transcription to a fully activated level. The chain is Upstream activation factor subunit spp27 (spp27) from Schizosaccharomyces pombe (strain 972 / ATCC 24843) (Fission yeast).